Here is a 179-residue protein sequence, read N- to C-terminus: Large ribosomal subunit protein uL5 (179 aa).

Belongs to the universal ribosomal protein uL5 family. In terms of assembly, part of the 50S ribosomal subunit; part of the 5S rRNA/L5/L18/L25 subcomplex. Contacts the 5S rRNA and the P site tRNA. Forms a bridge to the 30S subunit in the 70S ribosome.

In terms of biological role, this is one of the proteins that bind and probably mediate the attachment of the 5S RNA into the large ribosomal subunit, where it forms part of the central protuberance. In the 70S ribosome it contacts protein S13 of the 30S subunit (bridge B1b), connecting the 2 subunits; this bridge is implicated in subunit movement. Contacts the P site tRNA; the 5S rRNA and some of its associated proteins might help stabilize positioning of ribosome-bound tRNAs. The protein is Large ribosomal subunit protein uL5 of Chromohalobacter salexigens (strain ATCC BAA-138 / DSM 3043 / CIP 106854 / NCIMB 13768 / 1H11).